The primary structure comprises 352 residues: CRISPR-associated endonuclease Cas1 1 (352 aa).

Residues E207, H274, and E289 each contribute to the Mn(2+) site.

It belongs to the CRISPR-associated endonuclease Cas1 family. As to quaternary structure, homodimer, forms a heterotetramer with a Cas2 homodimer. It depends on Mg(2+) as a cofactor. The cofactor is Mn(2+).

CRISPR (clustered regularly interspaced short palindromic repeat), is an adaptive immune system that provides protection against mobile genetic elements (viruses, transposable elements and conjugative plasmids). CRISPR clusters contain spacers, sequences complementary to antecedent mobile elements, and target invading nucleic acids. CRISPR clusters are transcribed and processed into CRISPR RNA (crRNA). Acts as a dsDNA endonuclease. Involved in the integration of spacer DNA into the CRISPR cassette. The polypeptide is CRISPR-associated endonuclease Cas1 1 (Saccharolobus solfataricus (strain ATCC 35092 / DSM 1617 / JCM 11322 / P2) (Sulfolobus solfataricus)).